A 308-amino-acid chain; its full sequence is Tyrosine recombinase XerD (308 aa).

The 85-residue stretch at 13 to 97 (PSSTEAIQRF…VFKRFFQWAL (85 aa)) folds into the Core-binding (CB) domain. One can recognise a Tyr recombinase domain in the interval 118–302 (RVPKTLSEAQ…ARERLRTLHA (185 aa)). Catalysis depends on residues arginine 158, lysine 183, histidine 254, arginine 257, and histidine 280. Catalysis depends on tyrosine 289, which acts as the O-(3'-phospho-DNA)-tyrosine intermediate.

It belongs to the 'phage' integrase family. XerD subfamily. In terms of assembly, forms a cyclic heterotetrameric complex composed of two molecules of XerC and two molecules of XerD.

The protein localises to the cytoplasm. Its function is as follows. Site-specific tyrosine recombinase, which acts by catalyzing the cutting and rejoining of the recombining DNA molecules. The XerC-XerD complex is essential to convert dimers of the bacterial chromosome into monomers to permit their segregation at cell division. It also contributes to the segregational stability of plasmids. The sequence is that of Tyrosine recombinase XerD from Ralstonia nicotianae (strain ATCC BAA-1114 / GMI1000) (Ralstonia solanacearum).